The sequence spans 864 residues: DNA mismatch repair protein MutS (864 aa).

ATP is bound at residue 607-614 (GPNMGGKS).

This sequence belongs to the DNA mismatch repair MutS family.

Functionally, this protein is involved in the repair of mismatches in DNA. It is possible that it carries out the mismatch recognition step. This protein has a weak ATPase activity. The protein is DNA mismatch repair protein MutS of Neisseria gonorrhoeae (strain NCCP11945).